We begin with the raw amino-acid sequence, 768 residues long: Valine--tRNA ligase (768 aa).

Positions 37–47 (PTVSGKMHMGH) match the 'HIGH' region motif. The short motif at 510–514 (KMSKS) is the 'KMSKS' region element. An ATP-binding site is contributed by Lys513.

Belongs to the class-I aminoacyl-tRNA synthetase family. ValS type 2 subfamily.

Its subcellular location is the cytoplasm. It catalyses the reaction tRNA(Val) + L-valine + ATP = L-valyl-tRNA(Val) + AMP + diphosphate. Its function is as follows. Catalyzes the attachment of valine to tRNA(Val). As ValRS can inadvertently accommodate and process structurally similar amino acids such as threonine, to avoid such errors, it has a 'posttransfer' editing activity that hydrolyzes mischarged Thr-tRNA(Val) in a tRNA-dependent manner. This is Valine--tRNA ligase from Picrophilus torridus (strain ATCC 700027 / DSM 9790 / JCM 10055 / NBRC 100828 / KAW 2/3).